Reading from the N-terminus, the 610-residue chain is Elongation factor 4 (610 aa).

Residues 11 to 193 (ENIRNFSIIA…QIVEKVPAPS (183 aa)) enclose the tr-type G domain. GTP-binding positions include 23–28 (DHGKST) and 140–143 (NKID).

Belongs to the TRAFAC class translation factor GTPase superfamily. Classic translation factor GTPase family. LepA subfamily.

It is found in the cell membrane. It carries out the reaction GTP + H2O = GDP + phosphate + H(+). Functionally, required for accurate and efficient protein synthesis under certain stress conditions. May act as a fidelity factor of the translation reaction, by catalyzing a one-codon backward translocation of tRNAs on improperly translocated ribosomes. Back-translocation proceeds from a post-translocation (POST) complex to a pre-translocation (PRE) complex, thus giving elongation factor G a second chance to translocate the tRNAs correctly. Binds to ribosomes in a GTP-dependent manner. The sequence is that of Elongation factor 4 from Streptococcus equi subsp. zooepidemicus (strain H70).